The chain runs to 208 residues: Small ribosomal subunit protein uS4 (208 aa).

The S4 RNA-binding domain maps to 95-157 (RRIDNVVYRA…DRLKKLVRSN (63 aa)).

This sequence belongs to the universal ribosomal protein uS4 family. As to quaternary structure, part of the 30S ribosomal subunit. Contacts protein S5. The interaction surface between S4 and S5 is involved in control of translational fidelity.

Functionally, one of the primary rRNA binding proteins, it binds directly to 16S rRNA where it nucleates assembly of the body of the 30S subunit. In terms of biological role, with S5 and S12 plays an important role in translational accuracy. This is Small ribosomal subunit protein uS4 from Borrelia turicatae (strain 91E135).